Consider the following 1015-residue polypeptide: Probable beta-galactosidase B (1015 aa).

Residues 1 to 21 (MAHIYRLLLLLLSNLWFSAAA) form the signal peptide. Asparagine 23 is a glycosylation site (N-linked (GlcNAc...) asparagine). Tyrosine 90 lines the substrate pocket. The N-linked (GlcNAc...) asparagine glycan is linked to asparagine 100. Substrate contacts are provided by asparagine 135, alanine 136, and glutamate 137. Residue asparagine 172 is glycosylated (N-linked (GlcNAc...) asparagine). Substrate is bound at residue asparagine 195. The Proton donor role is filled by glutamate 196. Asparagine 211 is a glycosylation site (N-linked (GlcNAc...) asparagine). A substrate-binding site is contributed by tyrosine 265. A disulfide bridge links cysteine 271 with cysteine 324. Glutamate 308 acts as the Nucleophile in catalysis. Tyrosine 373 lines the substrate pocket. Residues asparagine 411, asparagine 441, asparagine 456, asparagine 554, asparagine 679, asparagine 735, asparagine 775, asparagine 821, and asparagine 878 are each glycosylated (N-linked (GlcNAc...) asparagine).

This sequence belongs to the glycosyl hydrolase 35 family.

It is found in the secreted. The enzyme catalyses Hydrolysis of terminal non-reducing beta-D-galactose residues in beta-D-galactosides.. Cleaves beta-linked terminal galactosyl residues from gangliosides, glycoproteins, and glycosaminoglycans. This Neosartorya fischeri (strain ATCC 1020 / DSM 3700 / CBS 544.65 / FGSC A1164 / JCM 1740 / NRRL 181 / WB 181) (Aspergillus fischerianus) protein is Probable beta-galactosidase B (lacB).